The primary structure comprises 289 residues: MTEQVNNDTTSDTTTTITTVYISNLPFTASERDLHAFLNNYGASSVLIPTQTVRRFSKRHNSNPRKPLGIAFAQFANNTLALKAIQDLNGTVFQNQKLFLKLHVPYEADSTPDTDVKKPKEKNKVKKTPETAADTVYCHDLPDDITDSEIRELFQLYSPQEIWIYRSKVYRRKCIPFAPHQITAALVTLQSETPIGDICDSVAKTATLRGKSIIVKPAYVSKIQEIKQLVKDNLTNARDPPPAALAEPAPAPAPVEPAEQVQEGQDNAETNDVPPPPASSSDRPTVAAT.

The region spanning 18-105 is the RRM domain; that stretch reads TTVYISNLPF…QKLFLKLHVP (88 aa). Residues 235–289 form a disordered region; it reads TNARDPPPAALAEPAPAPAPVEPAEQVQEGQDNAETNDVPPPPASSSDRPTVAAT. The segment covering 239–255 has biased composition (pro residues); the sequence is DPPPAALAEPAPAPAPV. Residues 279–289 show a composition bias toward polar residues; it reads SSSDRPTVAAT.

This sequence belongs to the RRT5 family.

Functionally, may be involved in the modulation of rDNA transcription. The protein is Regulator of rDNA transcription protein 5 (RRT5) of Saccharomyces cerevisiae (strain RM11-1a) (Baker's yeast).